The sequence spans 139 residues: Translation initiation factor 2 subunit beta (139 aa).

This sequence belongs to the eIF-2-beta/eIF-5 family. Heterotrimer composed of an alpha, a beta and a gamma chain.

Functionally, eIF-2 functions in the early steps of protein synthesis by forming a ternary complex with GTP and initiator tRNA. In Methanococcus aeolicus (strain ATCC BAA-1280 / DSM 17508 / OCM 812 / Nankai-3), this protein is Translation initiation factor 2 subunit beta.